The chain runs to 243 residues: Large ribosomal subunit protein uL3 (243 aa).

2 disordered regions span residues 139–164 (VSHR…KMPG) and 218–243 (KPGK…QEGV). Q151 bears the N5-methylglutamine mark. Positions 231 to 243 (QTAAAPAAEQEGV) are enriched in low complexity.

Belongs to the universal ribosomal protein uL3 family. Part of the 50S ribosomal subunit. Forms a cluster with proteins L14 and L19. In terms of processing, methylated by PrmB.

Functionally, one of the primary rRNA binding proteins, it binds directly near the 3'-end of the 23S rRNA, where it nucleates assembly of the 50S subunit. This is Large ribosomal subunit protein uL3 from Rhodopseudomonas palustris (strain BisB18).